The primary structure comprises 309 residues: Ribonuclease Z (309 aa).

7 residues coordinate Zn(2+): H63, H65, D67, H68, H145, D216, and H274. D67 serves as the catalytic Proton acceptor.

The protein belongs to the RNase Z family. Homodimer. Requires Zn(2+) as cofactor.

The catalysed reaction is Endonucleolytic cleavage of RNA, removing extra 3' nucleotides from tRNA precursor, generating 3' termini of tRNAs. A 3'-hydroxy group is left at the tRNA terminus and a 5'-phosphoryl group is left at the trailer molecule.. Its function is as follows. Zinc phosphodiesterase, which displays some tRNA 3'-processing endonuclease activity. Probably involved in tRNA maturation, by removing a 3'-trailer from precursor tRNA. The sequence is that of Ribonuclease Z from Streptococcus agalactiae serotype V (strain ATCC BAA-611 / 2603 V/R).